Here is a 211-residue protein sequence, read N- to C-terminus: UPF0637 protein Bsph_1379 (211 aa).

It belongs to the UPF0637 family.

This is UPF0637 protein Bsph_1379 from Lysinibacillus sphaericus (strain C3-41).